The primary structure comprises 638 residues: Sodium- and chloride-dependent neutral and basic amino acid transporter B(0+) (638 aa).

Over 1 to 44 (MDRLKCPNFFKCRQKEKVTASSENFHVGENDENQERGNWSKKSD) the chain is Cytoplasmic. Transmembrane regions (helical) follow at residues 45-65 (YLLSMVGYAVGLGNVWRFPYL), 72-92 (GAFLIPYAIMLALAGLPLFFL), and 110-130 (ILPLFQGVGITMVLISVFVAI). Residues 131-230 (YYNVIIAYSL…RSSGMDETGV (100 aa)) lie on the Extracellular side of the membrane. N-linked (GlcNAc...) asparagine glycans are attached at residues asparagine 155, asparagine 163, asparagine 174, asparagine 185, asparagine 193, and asparagine 198. The next 2 helical transmembrane spans lie at 231–251 (VVWYLALCLLLAWLIVGAALF) and 257–277 (SGKVVYFTALFPYVVLLILLI). A glycan (N-linked (GlcNAc...) asparagine) is linked at asparagine 298. A run of 7 helical transmembrane segments spans residues 311 to 331 (AATQIFYSLSVAWGGLVALSS), 344 to 364 (IIVCLTNCLTSVFAGFAIFSI), 395 to 415 (LAQLPAGPFWSILFFFMLLTL), 453 to 473 (ILFLLGLLCVTQAGIYWVHLI), 476 to 496 (FCAGWGILIAAILEIAGIIWI), 524 to 544 (CWFVITPILLSAILVWSLVKF), and 559 to 579 (VALGWCMIIFCIIWIPIMAII). Over 580–638 (KIVQAEGNILQRIISCCRPASNWGPYLEKHRGERYRDMAEPAKETDHEIPTISGSTKPE) the chain is Cytoplasmic. Positions 618-628 (AEPAKETDHEI) are enriched in basic and acidic residues. Positions 618–638 (AEPAKETDHEIPTISGSTKPE) are disordered.

This sequence belongs to the sodium:neurotransmitter symporter (SNF) (TC 2.A.22) family. SLC6A14 subfamily. Expressed in the distal region of the intestinal tract: cecum and colon.

It is found in the membrane. The protein localises to the apical cell membrane. The enzyme catalyses glycine(out) + chloride(out) + 2 Na(+)(out) = glycine(in) + chloride(in) + 2 Na(+)(in). It carries out the reaction L-leucine(out) + chloride(out) + 2 Na(+)(out) = L-leucine(in) + chloride(in) + 2 Na(+)(in). It catalyses the reaction L-glutamine(out) + chloride(out) + 2 Na(+)(out) = L-glutamine(in) + chloride(in) + 2 Na(+)(in). The catalysed reaction is L-arginine(out) + chloride(out) + 2 Na(+)(out) = L-arginine(in) + chloride(in) + 2 Na(+)(in). The enzyme catalyses (R)-carnitine(out) + chloride(out) + 2 Na(+)(out) = (R)-carnitine(in) + chloride(in) + 2 Na(+)(in). It carries out the reaction O-propanoyl-(R)-carnitine(out) + chloride(out) + 2 Na(+)(out) = O-propanoyl-(R)-carnitine(in) + chloride(in) + 2 Na(+)(in). It catalyses the reaction L-isoleucine(out) + chloride(out) + 2 Na(+)(out) = L-isoleucine(in) + chloride(in) + 2 Na(+)(in). The catalysed reaction is L-methionine(out) + chloride(out) + 2 Na(+)(out) = L-methionine(in) + chloride(in) + 2 Na(+)(in). The enzyme catalyses L-valine(out) + chloride(out) + 2 Na(+)(out) = L-valine(in) + chloride(in) + 2 Na(+)(in). It carries out the reaction L-alanine(out) + chloride(out) + 2 Na(+)(out) = L-alanine(in) + chloride(in) + 2 Na(+)(in). It catalyses the reaction L-serine(out) + chloride(out) + 2 Na(+)(out) = L-serine(in) + chloride(in) + 2 Na(+)(in). The catalysed reaction is L-cysteine(out) + chloride(out) + 2 Na(+)(out) = L-cysteine(in) + chloride(in) + 2 Na(+)(in). The enzyme catalyses L-asparagine(out) + chloride(out) + 2 Na(+)(out) = L-asparagine(in) + chloride(in) + 2 Na(+)(in). It carries out the reaction L-threonine(out) + chloride(out) + 2 Na(+)(out) = L-threonine(in) + chloride(in) + 2 Na(+)(in). It catalyses the reaction L-phenylalanine(out) + chloride(out) + 2 Na(+)(out) = L-phenylalanine(in) + chloride(in) + 2 Na(+)(in). The catalysed reaction is L-tryptophan(out) + chloride(out) + 2 Na(+)(out) = L-tryptophan(in) + chloride(in) + 2 Na(+)(in). The enzyme catalyses L-tyrosine(out) + chloride(out) + 2 Na(+)(out) = L-tyrosine(in) + chloride(in) + 2 Na(+)(in). It carries out the reaction L-histidine(out) + chloride(out) + 2 Na(+)(out) = L-histidine(in) + chloride(in) + 2 Na(+)(in). It catalyses the reaction L-lysine(out) + chloride(out) + 2 Na(+)(out) = L-lysine(in) + chloride(in) + 2 Na(+)(in). The catalysed reaction is O-butanoyl-(R)-carnitine(out) + chloride(out) + 2 Na(+)(out) = O-butanoyl-(R)-carnitine(in) + chloride(in) + 2 Na(+)(in). In terms of biological role, amino acid transporter that plays an important role in the absorption of amino acids in the intestinal tract. Mediates the uptake of a broad range of neutral and cationic amino acids (with the exception of proline) in a Na(+)/Cl(-)-dependent manner. Transports non-alpha-amino acids such as beta-alanine with low affinity, and has a higher affinity for dipolar and cationic amino acids such as leucine and lysine. Can also transport carnitine, butyrylcarnitine and propionylcarnitine coupled to the transmembrane gradients of Na(+) and Cl(-). The sequence is that of Sodium- and chloride-dependent neutral and basic amino acid transporter B(0+) from Mus musculus (Mouse).